Consider the following 680-residue polypeptide: Nodulation protein NolNO (680 aa).

This sequence belongs to the NodU/CmcH family.

The protein localises to the cytoplasm. Involved in the O-carbamoylation of nod factors. In Sinorhizobium fredii (strain NBRC 101917 / NGR234), this protein is Nodulation protein NolNO (nolO).